Here is a 1735-residue protein sequence, read N- to C-terminus: Inactive tyrosine-protein kinase PEAK1 (1735 aa).

2 disordered regions span residues 26 to 66 (LHQL…PPVA) and 111 to 145 (LSQK…KISN). 2 stretches are compositionally biased toward polar residues: residues 111 to 121 (LSQKPLNNNSE) and 130 to 145 (DPQQ…KISN). Phosphoserine is present on serine 282. Disordered regions lie at residues 324–410 (NSGV…SVKV), 491–514 (GRPK…LTPG), and 537–580 (SPRQ…SKTI). A compositionally biased stretch (low complexity) spans 325–336 (SGVSYGQGSVQS). Residues 337-365 (TISSDCTSPGSSFTEESRSETASSLSQKV) show a composition bias toward polar residues. The segment covering 367 to 378 (NGGISPGNPGNS) has biased composition (low complexity). A compositionally biased stretch (polar residues) spans 384–393 (TESNFESPPG). Residues 498–509 (SSSTPNSPVTSP) show a composition bias toward low complexity. Residues serine 537, serine 569, and serine 584 each carry the phosphoserine modification. Residues 566-580 (APTSPTATNISSKTI) are compositionally biased toward polar residues. A phosphotyrosine mark is found at tyrosine 632 and tyrosine 638. Phosphoserine is present on serine 645. Position 662 is a phosphotyrosine (tyrosine 662). Disordered regions lie at residues 663 to 762 (EEIE…REKA), 800 to 919 (PDAD…AADA), and 1019 to 1097 (RNSE…SATY). Polar residues-rich tracts occupy residues 704-735 (QEFN…QRPT), 745-757 (AQGS…SSNS), and 819-839 (LFTS…SPTA). Phosphoserine is present on residues serine 824 and serine 825. Low complexity predominate over residues 847 to 863 (TKPVTSPPSKLVTSAQS). Over residues 864–873 (EPPPPFPPPR) the composition is skewed to pro residues. The span at 879 to 901 (YHASNLLQRHFTNWTKPTSPTRS) shows a compositional bias: polar residues. Serine 897 is subject to Phosphoserine. Composition is skewed to basic and acidic residues over residues 902–919 (TEAE…AADA) and 1037–1055 (ACSR…RDPR). Residues 1076–1086 (EREEEKDDTLD) show a composition bias toward acidic residues. Threonine 1141 bears the Phosphothreonine mark. Tyrosine 1177 carries the phosphotyrosine modification. The interval 1274–1300 (EVVGKLRSLHTDALKRLAVKCEDLFMA) is required for homodimerization. The Protein kinase domain maps to 1302-1664 (QKDQLRFGVD…LLWGPREDLF (363 aa)). The residue at position 1363 (serine 1363) is a Phosphoserine. Residues 1394–1445 (WEDPDAPEKAEDGTEDSEEEGKAETLGGNPEPCSETEPSQKENQRVTNRKQR) are disordered. The interval 1659–1732 (PREDLFQIFT…DSLSYIVKIL (74 aa)) is required for homodimerization.

It belongs to the protein kinase superfamily. In terms of assembly, homodimer. Interacts with BCAR1 and CRK. Interacts with PRAG1. Interacts (when phosphorylated at Tyr-1177) with SHC1 (via PID domain). Found in a complex with PPP1CA, PPP1CC and SHC1. Interacts (when phosphorylated at Tyr-632) with tensin TNS3 (when phosphorylated on the SH2 domain); TNS3 also interacts with integrins ITGB1, ITGB3 and ITGB5 and mediates their association with PEAK1. Post-translationally, phosphorylated on tyrosine in a CSK-dependent manner in response to adhesion to fibronectin and to EGF stimulation. Phosphorylation at Tyr-662 by a Src family kinase controls subcellular localization to focal adhesion and focal adhesion dynamics. Phosphorylation at Tyr-1177 is essential for binding to SHC1. Phosphorylation at Tyr-632 promotes interaction with tensin TNS3.

It localises to the cytoplasm. The protein localises to the cytoskeleton. The protein resides in the cell junction. It is found in the focal adhesion. Its function is as follows. Probable catalytically inactive kinase. Scaffolding protein that regulates the cytoskeleton to control cell spreading and migration by modulating focal adhesion dynamics. Acts as a scaffold for mediating EGFR signaling. In Mus musculus (Mouse), this protein is Inactive tyrosine-protein kinase PEAK1 (Peak1).